A 286-amino-acid polypeptide reads, in one-letter code: Diaminopimelate epimerase (286 aa).

2 residues coordinate substrate: Asn13 and Asn66. The active-site Proton donor is the Cys75. Substrate contacts are provided by residues 76–77, Asn165, Asn198, and 216–217; these read GN and ER. Residue Cys225 is the Proton acceptor of the active site. 226–227 is a substrate binding site; it reads GT.

It belongs to the diaminopimelate epimerase family. As to quaternary structure, homodimer.

The protein resides in the cytoplasm. The enzyme catalyses (2S,6S)-2,6-diaminopimelate = meso-2,6-diaminopimelate. It functions in the pathway amino-acid biosynthesis; L-lysine biosynthesis via DAP pathway; DL-2,6-diaminopimelate from LL-2,6-diaminopimelate: step 1/1. In terms of biological role, catalyzes the stereoinversion of LL-2,6-diaminopimelate (L,L-DAP) to meso-diaminopimelate (meso-DAP), a precursor of L-lysine and an essential component of the bacterial peptidoglycan. The polypeptide is Diaminopimelate epimerase (Oceanobacillus iheyensis (strain DSM 14371 / CIP 107618 / JCM 11309 / KCTC 3954 / HTE831)).